Here is a 1053-residue protein sequence, read N- to C-terminus: Probable sucrose-phosphate synthase (1053 aa).

Residues 103-115 show a composition bias toward basic and acidic residues; that stretch reads RRQERERGRREAV. Disordered regions lie at residues 103 to 127 and 673 to 693; these read RRQE…EGEK and LRSI…DSLR.

The protein belongs to the glycosyltransferase 1 family. In terms of assembly, homodimer or homotetramer.

It carries out the reaction beta-D-fructose 6-phosphate + UDP-alpha-D-glucose = sucrose 6(F)-phosphate + UDP + H(+). It participates in glycan biosynthesis; sucrose biosynthesis; sucrose from D-fructose 6-phosphate and UDP-alpha-D-glucose: step 1/2. Activity is regulated by phosphorylation and moderated by concentration of metabolites and light. Its function is as follows. Plays a role in photosynthetic sucrose synthesis by catalyzing the rate-limiting step of sucrose biosynthesis from UDP-glucose and fructose- 6-phosphate. Involved in the regulation of carbon partitioning in the leaves of plants. May regulate the synthesis of sucrose and therefore play a major role as a limiting factor in the export of photoassimilates out of the leaf. Plays a role for sucrose availability that is essential for plant growth and fiber elongation. The chain is Probable sucrose-phosphate synthase (SPS) from Solanum tuberosum (Potato).